Consider the following 2564-residue polypeptide: Spectrin beta chain, non-erythrocytic 4 (2564 aa).

Residues 1–37 (MAQVPGEVDNMEGLPAPNNNPAARWESPDRGWEREQP) form a disordered region. The segment at 1-282 (MAQVPGEVDN…IITYVVSFYH (282 aa)) is actin-binding. Positions 26–36 (ESPDRGWEREQ) are enriched in basic and acidic residues. 2 Calponin-homology (CH) domains span residues 61 to 165 (AVQK…LRFQ) and 180 to 285 (RSAK…HYFS). Spectrin repeat units follow at residues 311–418 (IERY…AALR), 430–533 (LAQR…RLEQ), 536–641 (ALQK…AELE), 774–879 (ALHQ…WLRD), 884–982 (YRMF…RKEE), 1089–1196 (RLQR…EALV), 1306–1407 (ELQH…RQLF), 1412–1512 (ADQL…RLLL), 1515–1617 (KELH…QQVL), 1623–1725 (VEQY…ALEQ), 1728–1830 (WLYQ…AQLL), 1835–1935 (ELHK…EDAR), 1944–2046 (ALRF…WLQQ), and 2049–2123 (EVHQ…QSKQ). The disordered stretch occupies residues 1853–1872 (KRRRLPRLTTPPEPRPSASS). Residues 2208 to 2225 (PAAPEDAAETPATPAAAE) show a composition bias toward low complexity. Disordered regions lie at residues 2208–2439 (PAAP…KSSN) and 2533–2564 (ARWGQTLPTTSSTDEGNPKREGGDRRASGRRK). Basic and acidic residues-rich tracts occupy residues 2227-2254 (VRPRPERQESADRAEELPRRRRPERQES), 2268-2278 (ERQESAEHEAA), and 2287-2318 (EQMERRRERRERRLERQESSEQEMPIRGDLVK). A compositionally biased stretch (pro residues) spans 2343 to 2355 (PSLPQPRELPPGR). Basic and acidic residues-rich tracts occupy residues 2362-2377 (LPERTPRPDRPRARDR) and 2424-2435 (FLLRKRELDANR). In terms of domain architecture, PH spans 2418–2527 (TVQHEGFLLR…WLEAVASSVA (110 aa)). Polar residues predominate over residues 2538-2547 (TLPTTSSTDE). Residues 2548–2564 (GNPKREGGDRRASGRRK) show a composition bias toward basic and acidic residues.

The protein belongs to the spectrin family. Expressed in skeletal muscle at the sarcolemma and in the muscle capillaries (at protein level). Abundantly expressed in brain and pancreatic islets.

The protein localises to the cytoplasm. It localises to the cytoskeleton. It is found in the cell cortex. The polypeptide is Spectrin beta chain, non-erythrocytic 4 (SPTBN4) (Homo sapiens (Human)).